A 436-amino-acid polypeptide reads, in one-letter code: Serine--tRNA ligase (436 aa).

Residue 242-244 coordinates L-serine; it reads TAE. ATP is bound at residue 273-275; that stretch reads RSE. E296 provides a ligand contact to L-serine. An ATP-binding site is contributed by 360-363; that stretch reads EISS. Residue S395 coordinates L-serine.

Belongs to the class-II aminoacyl-tRNA synthetase family. Type-1 seryl-tRNA synthetase subfamily. Homodimer. The tRNA molecule binds across the dimer.

The protein resides in the cytoplasm. The catalysed reaction is tRNA(Ser) + L-serine + ATP = L-seryl-tRNA(Ser) + AMP + diphosphate + H(+). The enzyme catalyses tRNA(Sec) + L-serine + ATP = L-seryl-tRNA(Sec) + AMP + diphosphate + H(+). The protein operates within aminoacyl-tRNA biosynthesis; selenocysteinyl-tRNA(Sec) biosynthesis; L-seryl-tRNA(Sec) from L-serine and tRNA(Sec): step 1/1. Catalyzes the attachment of serine to tRNA(Ser). Is also able to aminoacylate tRNA(Sec) with serine, to form the misacylated tRNA L-seryl-tRNA(Sec), which will be further converted into selenocysteinyl-tRNA(Sec). This Polynucleobacter asymbioticus (strain DSM 18221 / CIP 109841 / QLW-P1DMWA-1) (Polynucleobacter necessarius subsp. asymbioticus) protein is Serine--tRNA ligase.